The following is a 251-amino-acid chain: tRNA (guanine-N(1)-)-methyltransferase (251 aa).

Residues Gly-113 and 133 to 138 each bind S-adenosyl-L-methionine; that span reads IGDYVL.

It belongs to the RNA methyltransferase TrmD family. In terms of assembly, homodimer.

The protein resides in the cytoplasm. It carries out the reaction guanosine(37) in tRNA + S-adenosyl-L-methionine = N(1)-methylguanosine(37) in tRNA + S-adenosyl-L-homocysteine + H(+). Its function is as follows. Specifically methylates guanosine-37 in various tRNAs. The chain is tRNA (guanine-N(1)-)-methyltransferase from Methylococcus capsulatus (strain ATCC 33009 / NCIMB 11132 / Bath).